A 387-amino-acid polypeptide reads, in one-letter code: Cysteine desulfurase IscS (387 aa).

Residues A73 to T74, N155, Q183, and S203 to H205 contribute to the pyridoxal 5'-phosphate site. The residue at position 206 (K206) is an N6-(pyridoxal phosphate)lysine. T241 serves as a coordination point for pyridoxal 5'-phosphate. The active-site Cysteine persulfide intermediate is C328. [2Fe-2S] cluster is bound at residue C328.

This sequence belongs to the class-V pyridoxal-phosphate-dependent aminotransferase family. NifS/IscS subfamily. In terms of assembly, homodimer. Forms a heterotetramer with IscU, interacts with other sulfur acceptors. Requires pyridoxal 5'-phosphate as cofactor.

It is found in the cytoplasm. It carries out the reaction (sulfur carrier)-H + L-cysteine = (sulfur carrier)-SH + L-alanine. It functions in the pathway cofactor biosynthesis; iron-sulfur cluster biosynthesis. Master enzyme that delivers sulfur to a number of partners involved in Fe-S cluster assembly, tRNA modification or cofactor biosynthesis. Catalyzes the removal of elemental sulfur atoms from cysteine to produce alanine. Functions as a sulfur delivery protein for Fe-S cluster synthesis onto IscU, an Fe-S scaffold assembly protein, as well as other S acceptor proteins. In Helicobacter pylori (strain ATCC 700392 / 26695) (Campylobacter pylori), this protein is Cysteine desulfurase IscS.